Reading from the N-terminus, the 257-residue chain is Pyridoxine 5'-phosphate synthase (257 aa).

A 3-amino-2-oxopropyl phosphate-binding site is contributed by asparagine 6. 8–9 (DH) contributes to the 1-deoxy-D-xylulose 5-phosphate binding site. Arginine 17 serves as a coordination point for 3-amino-2-oxopropyl phosphate. Histidine 42 serves as the catalytic Proton acceptor. Residues arginine 44 and histidine 49 each coordinate 1-deoxy-D-xylulose 5-phosphate. Catalysis depends on glutamate 69, which acts as the Proton acceptor. Residue threonine 99 coordinates 1-deoxy-D-xylulose 5-phosphate. Catalysis depends on histidine 211, which acts as the Proton donor. Residues glycine 212 and 233-234 (GQ) contribute to the 3-amino-2-oxopropyl phosphate site.

Belongs to the PNP synthase family. As to quaternary structure, homooctamer; tetramer of dimers.

It localises to the cytoplasm. It catalyses the reaction 3-amino-2-oxopropyl phosphate + 1-deoxy-D-xylulose 5-phosphate = pyridoxine 5'-phosphate + phosphate + 2 H2O + H(+). It functions in the pathway cofactor biosynthesis; pyridoxine 5'-phosphate biosynthesis; pyridoxine 5'-phosphate from D-erythrose 4-phosphate: step 5/5. In terms of biological role, catalyzes the complicated ring closure reaction between the two acyclic compounds 1-deoxy-D-xylulose-5-phosphate (DXP) and 3-amino-2-oxopropyl phosphate (1-amino-acetone-3-phosphate or AAP) to form pyridoxine 5'-phosphate (PNP) and inorganic phosphate. This is Pyridoxine 5'-phosphate synthase from Campylobacter fetus subsp. fetus (strain 82-40).